The sequence spans 347 residues: 3',5'-bisphosphate nucleotidase 2 (347 aa).

The active-site Proton acceptor is the Asp46. Mg(2+) is bound by residues Glu71, Asp134, Ile136, and Asp137. The Proton acceptor role is filled by Thr139. 5 residues coordinate adenosine 3',5'-bisphosphate: Thr139, Ser255, Lys258, Arg272, and Asp284. AMP-binding residues include Ser255, Lys258, Arg272, and Asp284. Residue Asp284 coordinates Mg(2+).

Belongs to the inositol monophosphatase superfamily. It depends on Mg(2+) as a cofactor. Very low expression in roots, leaves, stems, flowers and siliques.

The enzyme catalyses adenosine 3',5'-bisphosphate + H2O = AMP + phosphate. It carries out the reaction 3'-phosphoadenylyl sulfate + H2O = adenosine 5'-phosphosulfate + phosphate. It catalyses the reaction 1D-myo-inositol 1,4-bisphosphate + H2O = 1D-myo-inositol 4-phosphate + phosphate. It participates in signal transduction; phosphatidylinositol signaling pathway. Its activity is regulated as follows. Inhibited by Li(+) (IC(50)=10 mM), Na(+) (IC(50)=200 mM) and Ca(2+) (IC(50)=0.03 mM). Functionally, phosphatase that converts adenosine 3'-phosphate 5'-phosphosulfate (PAPS) to adenosine 5'-phosphosulfate (APS) and 3'-phosphoadenosine 5'-phosphate (3'-PAP) to AMP. May regulate the flux of sulfur in the sulfur-activation pathway by converting PAPS to APS. Prevents both the toxicity of PAP on RNA processing enzymes as well as the product inhibition by PAP of sulfate conjugation. Is also able to hydrolyze inositol 1,4-bisphosphate. This is 3',5'-bisphosphate nucleotidase 2 from Arabidopsis thaliana (Mouse-ear cress).